Here is a 365-residue protein sequence, read N- to C-terminus: N5-carboxyaminoimidazole ribonucleotide synthase (365 aa).

ATP contacts are provided by residues Arg102, Lys143, 148–154, 177–180, Glu185, and 256–257; these read GYDGKGQ, EEYV, and NE. One can recognise an ATP-grasp domain in the interval 106–286; it reads KLFYRQHNLP…QFEQHLRAII (181 aa).

This sequence belongs to the PurK/PurT family. As to quaternary structure, homodimer.

It catalyses the reaction 5-amino-1-(5-phospho-beta-D-ribosyl)imidazole + hydrogencarbonate + ATP = 5-carboxyamino-1-(5-phospho-D-ribosyl)imidazole + ADP + phosphate + 2 H(+). Its pathway is purine metabolism; IMP biosynthesis via de novo pathway; 5-amino-1-(5-phospho-D-ribosyl)imidazole-4-carboxylate from 5-amino-1-(5-phospho-D-ribosyl)imidazole (N5-CAIR route): step 1/2. Catalyzes the ATP-dependent conversion of 5-aminoimidazole ribonucleotide (AIR) and HCO(3)(-) to N5-carboxyaminoimidazole ribonucleotide (N5-CAIR). This is N5-carboxyaminoimidazole ribonucleotide synthase from Saccharolobus solfataricus (strain ATCC 35092 / DSM 1617 / JCM 11322 / P2) (Sulfolobus solfataricus).